The primary structure comprises 173 residues: Ribosome maturation factor RimM (173 aa).

In terms of domain architecture, PRC barrel spans 95–169 (PDEFYDHELE…TIVIDPPEGL (75 aa)).

This sequence belongs to the RimM family. In terms of assembly, binds ribosomal protein uS19.

Its subcellular location is the cytoplasm. In terms of biological role, an accessory protein needed during the final step in the assembly of 30S ribosomal subunit, possibly for assembly of the head region. Essential for efficient processing of 16S rRNA. May be needed both before and after RbfA during the maturation of 16S rRNA. It has affinity for free ribosomal 30S subunits but not for 70S ribosomes. The polypeptide is Ribosome maturation factor RimM (Mycolicibacterium smegmatis (strain ATCC 700084 / mc(2)155) (Mycobacterium smegmatis)).